The following is a 446-amino-acid chain: Argininosuccinate lyase (446 aa).

The protein belongs to the lyase 1 family. Argininosuccinate lyase subfamily.

The protein resides in the cytoplasm. It carries out the reaction 2-(N(omega)-L-arginino)succinate = fumarate + L-arginine. It participates in amino-acid biosynthesis; L-arginine biosynthesis; L-arginine from L-ornithine and carbamoyl phosphate: step 3/3. This chain is Argininosuccinate lyase, found in Bacteroides thetaiotaomicron (strain ATCC 29148 / DSM 2079 / JCM 5827 / CCUG 10774 / NCTC 10582 / VPI-5482 / E50).